Here is a 348-residue protein sequence, read N- to C-terminus: UDP-3-O-acylglucosamine N-acyltransferase (348 aa).

Catalysis depends on histidine 241, which acts as the Proton acceptor.

Belongs to the transferase hexapeptide repeat family. LpxD subfamily. As to quaternary structure, homotrimer.

It carries out the reaction a UDP-3-O-[(3R)-3-hydroxyacyl]-alpha-D-glucosamine + a (3R)-hydroxyacyl-[ACP] = a UDP-2-N,3-O-bis[(3R)-3-hydroxyacyl]-alpha-D-glucosamine + holo-[ACP] + H(+). It functions in the pathway bacterial outer membrane biogenesis; LPS lipid A biosynthesis. Catalyzes the N-acylation of UDP-3-O-acylglucosamine using 3-hydroxyacyl-ACP as the acyl donor. Is involved in the biosynthesis of lipid A, a phosphorylated glycolipid that anchors the lipopolysaccharide to the outer membrane of the cell. In Neisseria meningitidis serogroup C (strain 053442), this protein is UDP-3-O-acylglucosamine N-acyltransferase.